The primary structure comprises 111 residues: Nucleoid-associated protein lhv_0401 (111 aa).

The protein belongs to the YbaB/EbfC family. In terms of assembly, homodimer.

It is found in the cytoplasm. The protein localises to the nucleoid. Binds to DNA and alters its conformation. May be involved in regulation of gene expression, nucleoid organization and DNA protection. The protein is Nucleoid-associated protein lhv_0401 of Lactobacillus helveticus (strain DPC 4571).